Reading from the N-terminus, the 210-residue chain is Cell division protein SepF (210 aa).

The protein belongs to the SepF family. Homodimer. Interacts with FtsZ.

It localises to the cytoplasm. Functionally, cell division protein that is part of the divisome complex and is recruited early to the Z-ring. Probably stimulates Z-ring formation, perhaps through the cross-linking of FtsZ protofilaments. Its function overlaps with FtsA. The sequence is that of Cell division protein SepF from Mycobacterium leprae (strain Br4923).